We begin with the raw amino-acid sequence, 256 residues long: MACGIPWKLARRDELMATRQAERPGEYFPPPYPPCPPTVVTPLRTSAYDFPEATFVTRPCLPAKKATGHKNVFERLTDTAYYTGSHRERFDEFGNGRGIAGREYLYAYDGLTESPSRCHEVYSSVIKRPRKPVVTPGTLGIQRFGVQIPAPRLMWLYRNGDKHDDGTPFFVRPYIKSMESLYQQITKEITPIAGPVRRIFDQNFRVITDLDDIVDGAKYLCTSGEPPAAYDRLEKFLSEWVIQKSQTKVPSQFFVV.

The segment at 71–103 is partial p25alpha domain; the sequence is NVFERLTDTAYYTGSHRERFDEFGNGRGIAGRE. A Doublecortin domain is found at 152–226; it reads RLMWLYRNGD…AKYLCTSGEP (75 aa).

Its subcellular location is the cytoplasm. The protein localises to the cytoskeleton. Its function is as follows. Specifically required in the formation and maintenance of the conoid fibers; the conoid is a component of the cytoskeletal apical complex, which is composed of a left-handed spiral of 14 fibers made from a nontubular tubulin polymer. Promotes the organization, curvature, and stability of the conoid fibers, and probably bridges other conoid components to the tubulin core. This Toxoplasma gondii (strain ATCC 50861 / VEG) protein is Doublecortin domain-containing protein.